The following is a 1361-amino-acid chain: uncharacterized protein (1361 aa).

The protein belongs to the IIV-6 261R/396L/443R family.

This is an uncharacterized protein from Invertebrate iridescent virus 6 (IIV-6).